Here is a 178-residue protein sequence, read N- to C-terminus: Histone deacetylase complex subunit SAP30L (178 aa).

Disulfide bonds link C24–C25 and C33–C69. An Atypical zinc finger spans residues 24 to 72; that stretch reads CCLIEDAERCGRPAGNASFSKRIQKSISQRKLKLDIDKSVRHLYICDFH. The disordered stretch occupies residues 80–99; sequence RNKRKRKTSDDGGESPDHEV. The Nuclear localization signal (NLS) signature appears at 81 to 86; it reads NKRKRK. Residues 83–85 are important for DNA and phosphoinositide binding; that stretch reads RKR.

Belongs to the SAP30 family. Interacts with components of the histone deacetylase complex sin3a, hdac1 and hdac2. Binds histones and nucleosomes. Detected in embryos at 2dpf (at protein level). Widely expressed during embryogenesis and in adults.

It is found in the nucleus. Its subcellular location is the nucleolus. Its function is as follows. Functions as a transcription repressor, probably via its interaction with histone deacetylase complexes. Required for normal expression of numerous target genes. Involved in the functional recruitment of the class 1 Sin3-histone deacetylase complex (HDAC) to the nucleolus. Binds DNA, apparently without sequence-specificity, and bends bound double-stranded DNA. Binds phosphoinositol phosphates (phosphoinositol 3-phosphate, phosphoinositol 4-phosphate and phosphoinositol 5-phosphate) via the same basic sequence motif that mediates DNA binding and nuclear import. The protein is Histone deacetylase complex subunit SAP30L (sap30l) of Danio rerio (Zebrafish).